Here is an 803-residue protein sequence, read N- to C-terminus: Bifunctional enzyme MurC/Ddl (803 aa).

The tract at residues 1 to 446 (MMKSLFYHFI…GEKLRDFEPQ (446 aa)) is UDP-N-acetylmuramate--alanine ligase. Residues 111–117 (GSHGKTT) and 600–655 (VEAF…CKEI) each bind ATP. The segment at 447–803 (KLHLGIICGG…SFVDQAFAIQ (357 aa)) is D-alanine--D-alanine ligase. The region spanning 567–778 (KRFMSDLGIP…YEQIVHQLVI (212 aa)) is the ATP-grasp domain. Residues Asp-732, Glu-745, and Asn-747 each contribute to the Mg(2+) site.

This sequence in the N-terminal section; belongs to the MurCDEF family. In the C-terminal section; belongs to the D-alanine--D-alanine ligase family. Requires Mg(2+) as cofactor. It depends on Mn(2+) as a cofactor.

Its subcellular location is the cytoplasm. The enzyme catalyses UDP-N-acetyl-alpha-D-muramate + L-alanine + ATP = UDP-N-acetyl-alpha-D-muramoyl-L-alanine + ADP + phosphate + H(+). The catalysed reaction is 2 D-alanine + ATP = D-alanyl-D-alanine + ADP + phosphate + H(+). It functions in the pathway cell wall biogenesis; peptidoglycan biosynthesis. Its function is as follows. Cell wall formation. The polypeptide is Bifunctional enzyme MurC/Ddl (murC/ddl) (Chlamydia trachomatis serovar D (strain ATCC VR-885 / DSM 19411 / UW-3/Cx)).